A 429-amino-acid polypeptide reads, in one-letter code: 46 kDa membrane protein (429 aa).

9 helical membrane-spanning segments follow: residues 26-46 (AALT…EDVF), 51-71 (TGID…VSVL), 99-119 (LVLV…VLLI), 173-193 (FLIH…ALLP), 224-244 (LLIK…AHPV), 279-299 (TLLF…TDVV), 315-335 (LLTV…IDNI), 360-380 (ILWW…AVGA), and 407-427 (IAVT…RYLV).

Belongs to the CitM (TC 2.A.11) transporter family.

It is found in the cell membrane. In Mycobacterium leprae (strain TN), this protein is 46 kDa membrane protein (ag45).